Reading from the N-terminus, the 498-residue chain is ATP synthase subunit beta, chloroplastic (498 aa).

ATP is bound at residue 172–179; that stretch reads GGAGVGKT.

The protein belongs to the ATPase alpha/beta chains family. In terms of assembly, F-type ATPases have 2 components, CF(1) - the catalytic core - and CF(0) - the membrane proton channel. CF(1) has five subunits: alpha(3), beta(3), gamma(1), delta(1), epsilon(1). CF(0) has four main subunits: a(1), b(1), b'(1) and c(9-12).

The protein resides in the plastid. The protein localises to the chloroplast thylakoid membrane. The enzyme catalyses ATP + H2O + 4 H(+)(in) = ADP + phosphate + 5 H(+)(out). Produces ATP from ADP in the presence of a proton gradient across the membrane. The catalytic sites are hosted primarily by the beta subunits. The chain is ATP synthase subunit beta, chloroplastic from Myristica fragrans (Nutmeg).